The sequence spans 411 residues: Glutamate dehydrogenase (411 aa).

The active site involves Lys-102.

The protein belongs to the Glu/Leu/Phe/Val dehydrogenases family.

The enzyme catalyses L-glutamate + NAD(+) + H2O = 2-oxoglutarate + NH4(+) + NADH + H(+). It catalyses the reaction L-glutamate + NADP(+) + H2O = 2-oxoglutarate + NH4(+) + NADPH + H(+). This is Glutamate dehydrogenase (GDH) from Vitis vinifera (Grape).